Reading from the N-terminus, the 503-residue chain is ATP synthase subunit alpha, chloroplastic (503 aa).

Gly-170–Thr-177 contributes to the ATP binding site.

The protein belongs to the ATPase alpha/beta chains family. F-type ATPases have 2 components, CF(1) - the catalytic core - and CF(0) - the membrane proton channel. CF(1) has five subunits: alpha(3), beta(3), gamma(1), delta(1), epsilon(1). CF(0) has four main subunits: a, b, b' and c.

It is found in the plastid. The protein resides in the chloroplast thylakoid membrane. It catalyses the reaction ATP + H2O + 4 H(+)(in) = ADP + phosphate + 5 H(+)(out). In terms of biological role, produces ATP from ADP in the presence of a proton gradient across the membrane. The alpha chain is a regulatory subunit. In Thalassiosira pseudonana (Marine diatom), this protein is ATP synthase subunit alpha, chloroplastic.